A 152-amino-acid chain; its full sequence is UPF0756 membrane protein Moth_1009 (152 aa).

4 consecutive transmembrane segments (helical) span residues 5–25 (LIILAVLVVAVLGRANTVALA), 41–61 (IFPFIEKGGTFWGLVLLIAAI), 75–95 (LGHVFLSWVGLSAFILSLITT), and 117–137 (LILGAVIAAAFLGGVPVGPFI).

It belongs to the UPF0756 family.

Its subcellular location is the cell membrane. The chain is UPF0756 membrane protein Moth_1009 from Moorella thermoacetica (strain ATCC 39073 / JCM 9320).